We begin with the raw amino-acid sequence, 426 residues long: Enolase (426 aa).

Residue Gln163 participates in (2R)-2-phosphoglycerate binding. The active-site Proton donor is the Glu205. 3 residues coordinate Mg(2+): Asp242, Glu285, and Asp312. Positions 337, 366, 367, and 388 each coordinate (2R)-2-phosphoglycerate. The active-site Proton acceptor is the Lys337.

Belongs to the enolase family. It depends on Mg(2+) as a cofactor.

The protein resides in the cytoplasm. Its subcellular location is the secreted. It localises to the cell surface. The enzyme catalyses (2R)-2-phosphoglycerate = phosphoenolpyruvate + H2O. It participates in carbohydrate degradation; glycolysis; pyruvate from D-glyceraldehyde 3-phosphate: step 4/5. Functionally, catalyzes the reversible conversion of 2-phosphoglycerate (2-PG) into phosphoenolpyruvate (PEP). It is essential for the degradation of carbohydrates via glycolysis. This chain is Enolase, found in Rhodospirillum centenum (strain ATCC 51521 / SW).